The sequence spans 1291 residues: DNA-directed RNA polymerase subunit beta (1291 aa).

The protein belongs to the RNA polymerase beta chain family. The RNAP catalytic core consists of 2 alpha, 1 beta, 1 beta' and 1 omega subunit. When a sigma factor is associated with the core the holoenzyme is formed, which can initiate transcription.

The catalysed reaction is RNA(n) + a ribonucleoside 5'-triphosphate = RNA(n+1) + diphosphate. DNA-dependent RNA polymerase catalyzes the transcription of DNA into RNA using the four ribonucleoside triphosphates as substrates. The chain is DNA-directed RNA polymerase subunit beta from Cytophaga hutchinsonii (strain ATCC 33406 / DSM 1761 / CIP 103989 / NBRC 15051 / NCIMB 9469 / D465).